We begin with the raw amino-acid sequence, 3433 residues long: Genome polyprotein (3433 aa).

The segment at Ser-2–Asn-15 is interaction with host EXOC1. The Cytoplasmic portion of the chain corresponds to Ser-2 to Lys-108. Residues Leu-37 to Val-72 are hydrophobic; homodimerization of capsid protein C. A propeptide spans Gly-106–Ala-123 (ER anchor for the capsid protein C, removed in mature form by serine protease NS3). The chain crosses the membrane as a helical span at residues Thr-109 to Phe-129. Topologically, residues Gln-130–Glu-248 are extracellular. Asn-138 is a glycosylation site (N-linked (GlcNAc...) asparagine; by host). The helical transmembrane segment at Ser-249–Gly-269 threads the bilayer. The Cytoplasmic segment spans residues Ser-270 to Arg-275. A helical membrane pass occupies residues Val-276–Ser-290. The Extracellular segment spans residues Phe-291–Leu-743. 6 cysteine pairs are disulfide-bonded: Cys-293-Cys-320, Cys-350-Cys-406, Cys-350-Cys-411, Cys-364-Cys-395, Cys-382-Cys-406, and Cys-382-Cys-411. The interval Asp-388–Gly-401 is fusion peptide. Asn-444 carries an N-linked (GlcNAc...) asparagine; by host glycan. Cystine bridges form between Cys-480/Cys-578 and Cys-595/Cys-626. A helical transmembrane segment spans residues Phe-744–Ile-764. The Cytoplasmic segment spans residues Asn-765–Ser-770. Residues Ile-771–Ala-791 traverse the membrane as a helical segment. Topologically, residues Asp-792–Asp-1216 are extracellular. 2 cysteine pairs are disulfide-bonded: Cys-795-Cys-806 and Cys-846-Cys-934. 3 N-linked (GlcNAc...) asparagine; by host glycosylation sites follow: Asn-921, Asn-966, and Asn-998. 4 cysteine pairs are disulfide-bonded: Cys-970–Cys-1014, Cys-1071–Cys-1120, Cys-1082–Cys-1103, and Cys-1104–Cys-1107. A helical membrane pass occupies residues Val-1217–Phe-1237. At Leu-1238–Gln-1245 the chain is on the cytoplasmic side. The chain crosses the membrane as a helical span at residues Glu-1246–Leu-1268. Topologically, residues Leu-1269 to Ala-1288 are lumenal. A helical transmembrane segment spans residues Ile-1289–Leu-1309. The Cytoplasmic segment spans residues Arg-1310 to Asn-1313. A helical membrane pass occupies residues Leu-1314–Arg-1331. The Lumenal portion of the chain corresponds to Glu-1332–Leu-1345. Residues Leu-1346–Ile-1366 form a helical membrane-spanning segment. Topologically, residues Ala-1367–Gly-1375 are cytoplasmic. A helical membrane pass occupies residues Trp-1376 to Ala-1396. Over Glu-1397–Asp-1399 the chain is Lumenal. Residues Ile-1400–Ser-1420 traverse the membrane as a helical segment. Topologically, residues Gly-1421–Val-1477 are cytoplasmic. The segment at Ile-1428–Ala-1467 is interacts with and activates NS3 protease. An intramembrane region (helical) is located at residues Cys-1478–Ile-1498. Residues Thr-1499–Ala-2174 lie on the Cytoplasmic side of the membrane. In terms of domain architecture, Peptidase S7 spans Gly-1506–Gly-1683. Residues His-1556, Asp-1580, and Ser-1640 each act as charge relay system; for serine protease NS3 activity in the active site. The Helicase ATP-binding domain maps to Pro-1686–Gln-1842. The segment at Arg-1690 to Gln-1693 is important for RNA-binding. Leu-1699–Thr-1706 serves as a coordination point for ATP. A DEAH box motif is present at residues Asp-1790–His-1793. The Helicase C-terminal domain maps to Gly-1853–Glu-2018. Lys-1894 bears the N6-acetyllysine; by host mark. Residues Glu-2169–Asp-2173 form a regulates the ATPase activity of NS3 helicase region. A helical membrane pass occupies residues Leu-2175–Leu-2195. Over Met-2196–Gly-2200 the chain is Lumenal. Positions Ile-2201 to Ala-2221 form an intramembrane region, helical. Residue Glu-2222 is a topological domain, lumenal. The chain crosses the membrane as a helical span at residues Val-2223–Ile-2243. The Cytoplasmic portion of the chain corresponds to Pro-2244–Ala-2258. The helical transmembrane segment at Val-2259–Leu-2279 threads the bilayer. Topologically, residues Asp-2280–Ala-2312 are lumenal. The helical intramembrane region spans Thr-2313–Ile-2333. The Lumenal portion of the chain corresponds to Thr-2334–Thr-2380. Residues Leu-2381–Gly-2401 form a helical membrane-spanning segment. Topologically, residues Trp-2402–Lys-2444 are cytoplasmic. The helical transmembrane segment at Lys-2445 to Val-2465 threads the bilayer. At Lys-2466–Glu-2470 the chain is on the lumenal side. The chain crosses the membrane as a helical span at residues Ala-2471 to Trp-2491. The Cytoplasmic segment spans residues Asn-2492–Leu-3433. In terms of domain architecture, mRNA cap 0-1 NS5-type MT spans Gly-2529–Ala-2794. Position 2584 (Ser-2584) interacts with S-adenosyl-L-methionine. Ser-2584 is subject to Phosphoserine. Catalysis depends on Lys-2589, which acts as the For 2'-O-MTase activity. S-adenosyl-L-methionine is bound by residues Gly-2614, Trp-2615, Thr-2632, Lys-2633, Glu-2639, Asp-2659, Val-2660, Asp-2674, and Ile-2675. The For 2'-O-MTase activity role is filled by Asp-2674. Residues Lys-2710 and Glu-2746 each act as for 2'-O-MTase activity in the active site. Tyr-2748 contributes to the S-adenosyl-L-methionine binding site. Residues Arg-2917–Lys-2919 carry the Nuclear localization signal motif. Zn(2+) contacts are provided by Glu-2968, His-2972, Cys-2977, and Cys-2980. Residues Gly-3058–Ser-3210 enclose the RdRp catalytic domain. Zn(2+) is bound by residues His-3245, Cys-3261, and Cys-3380. Residues Thr-3431–Leu-3433 carry the PDZ-binding motif.

In the N-terminal section; belongs to the class I-like SAM-binding methyltransferase superfamily. mRNA cap 0-1 NS5-type methyltransferase family. In terms of assembly, homodimer. Interacts (via N-terminus) with host EXOC1 (via C-terminus); this interaction results in EXOC1 degradation through the proteasome degradation pathway. Interacts with host DDX56; this interaction plays an important role in genomic RNA encapsidation. As to quaternary structure, forms heterodimers with envelope protein E in the endoplasmic reticulum and Golgi. Homodimer; in the endoplasmic reticulum and Golgi. In terms of assembly, homodimer; Homohexamer when secreted. NS1 interacts with NS4B. Interacts with host complement protein CFH; this interaction leads to the degradation of C3. As to quaternary structure, forms a heterodimer with serine protease NS3. May form homooligomers. Interacts with human SPCS1. Forms a heterodimer with NS2B. Interacts with NS4B. Interacts with unphosphorylated RNA-directed RNA polymerase NS5; this interaction stimulates RNA-directed RNA polymerase NS5 guanylyltransferase activity. In terms of assembly, interacts with host RTN3; this interaction is important to remodel host cell membranes. As to quaternary structure, interacts with Serine protease/Helicase NS3. Interacts with NS1. Homodimer. Interacts with host STAT2; this interaction inhibits the phosphorylation of the latter, and, when all viral proteins are present (polyprotein), targets STAT2 for degradation. Specific enzymatic cleavages in vivo yield mature proteins. Cleavages in the lumen of endoplasmic reticulum are performed by host signal peptidase, whereas cleavages in the cytoplasmic side are performed by serine protease NS3. Signal cleavage at the 2K-4B site requires a prior NS3 protease-mediated cleavage at the 4A-2K site. In terms of processing, cleaved in post-Golgi vesicles by a host furin, releasing the mature small envelope protein M, and peptide pr. This cleavage is incomplete as up to 30% of viral particles still carry uncleaved prM. Post-translationally, N-glycosylated. N-glycosylated. The excreted form is glycosylated and this is required for efficient secretion of the protein from infected cells. In terms of processing, acetylated by host KAT5. Acetylation modulates NS3 RNA-binding and unwinding activities and plays an important positive role for viral replication. Post-translationally, phosphorylated on serines residues. This phosphorylation may trigger NS5 nuclear localization.

The protein resides in the virion. It is found in the host nucleus. Its subcellular location is the host cytoplasm. It localises to the host perinuclear region. The protein localises to the secreted. The protein resides in the virion membrane. It is found in the host endoplasmic reticulum membrane. The catalysed reaction is Selective hydrolysis of -Xaa-Xaa-|-Yaa- bonds in which each of the Xaa can be either Arg or Lys and Yaa can be either Ser or Ala.. It carries out the reaction RNA(n) + a ribonucleoside 5'-triphosphate = RNA(n+1) + diphosphate. The enzyme catalyses a ribonucleoside 5'-triphosphate + H2O = a ribonucleoside 5'-diphosphate + phosphate + H(+). It catalyses the reaction ATP + H2O = ADP + phosphate + H(+). The catalysed reaction is a 5'-end (5'-triphosphoguanosine)-ribonucleoside in mRNA + S-adenosyl-L-methionine = a 5'-end (N(7)-methyl 5'-triphosphoguanosine)-ribonucleoside in mRNA + S-adenosyl-L-homocysteine. It carries out the reaction a 5'-end (N(7)-methyl 5'-triphosphoguanosine)-ribonucleoside in mRNA + S-adenosyl-L-methionine = a 5'-end (N(7)-methyl 5'-triphosphoguanosine)-(2'-O-methyl-ribonucleoside) in mRNA + S-adenosyl-L-homocysteine + H(+). In terms of biological role, plays a role in virus budding by binding to the cell membrane and gathering the viral RNA into a nucleocapsid that forms the core of a mature virus particle. During virus entry, may induce genome penetration into the host cytoplasm after hemifusion induced by the surface proteins. Can migrate to the cell nucleus where it modulates host functions. Overcomes the anti-viral effects of host EXOC1 by sequestering and degrading the latter through the proteasome degradation pathway. Its function is as follows. Inhibits RNA silencing by interfering with host Dicer. Prevents premature fusion activity of envelope proteins in trans-Golgi by binding to envelope protein E at pH6.0. After virion release in extracellular space, gets dissociated from E dimers. Functionally, acts as a chaperone for envelope protein E during intracellular virion assembly by masking and inactivating envelope protein E fusion peptide. prM is the only viral peptide matured by host furin in the trans-Golgi network probably to avoid catastrophic activation of the viral fusion activity in acidic Golgi compartment prior to virion release. prM-E cleavage is inefficient, and many virions are only partially matured. These uncleaved prM would play a role in immune evasion. In terms of biological role, may play a role in virus budding. Exerts cytotoxic effects by activating a mitochondrial apoptotic pathway through M ectodomain. May display a viroporin activity. Its function is as follows. Binds to host cell surface receptor and mediates fusion between viral and cellular membranes. Envelope protein is synthesized in the endoplasmic reticulum in the form of heterodimer with protein prM. They play a role in virion budding in the ER, and the newly formed immature particle is covered with 60 spikes composed of heterodimer between precursor prM and envelope protein E. The virion is transported to the Golgi apparatus where the low pH causes dissociation of PrM-E heterodimers and formation of E homodimers. prM-E cleavage is inefficient, and many virions are only partially matured. These uncleaved prM would play a role in immune evasion. Involved in immune evasion, pathogenesis and viral replication. Once cleaved off the polyprotein, is targeted to three destinations: the viral replication cycle, the plasma membrane and the extracellular compartment. Essential for viral replication. Required for formation of the replication complex and recruitment of other non-structural proteins to the ER-derived membrane structures. Excreted as a hexameric lipoparticle that plays a role against host immune response. Antagonizing the complement function. Binds to the host macrophages and dendritic cells. Inhibits signal transduction originating from Toll-like receptor 3 (TLR3). Functionally, component of the viral RNA replication complex that functions in virion assembly and antagonizes the host alpha/beta interferon antiviral response. In terms of biological role, required cofactor for the serine protease function of NS3. May have membrane-destabilizing activity and form viroporins. Its function is as follows. Displays three enzymatic activities: serine protease, NTPase and RNA helicase. NS3 serine protease, in association with NS2B, performs its autocleavage and cleaves the polyprotein at dibasic sites in the cytoplasm: C-prM, NS2A-NS2B, NS2B-NS3, NS3-NS4A, NS4A-2K and NS4B-NS5. NS3 RNA helicase binds RNA and unwinds dsRNA in the 3' to 5' direction. NS3 supports the separation of RNA daughter and template strands during viral replication. The helicase part is involved in the inhibition of phosphorylation of host STAT1, and thereby inhibition of host type-I IFN signaling. In addition, NS3 assists the initiation of replication by unwinding the RNA secondary structure in the 3' non-translated region (NTR). Inhibits STAT2 translocation in the nucleus after IFN-alpha treatment. Facilitates host membrane remodelling necessary for viral replication by interacting with host RTN3. Regulates the ATPase activity of the NS3 helicase activity. NS4A allows NS3 helicase to conserve energy during unwinding. Functionally, functions as a signal peptide for NS4B and is required for the interferon antagonism activity of the latter. In terms of biological role, induces the formation of ER-derived membrane vesicles where the viral replication takes place. Inhibits interferon (IFN)-induced host STAT1 phosphorylation and nuclear translocation, thereby preventing the establishment of cellular antiviral state by blocking the IFN-alpha/beta pathway. Inhibits STAT2 translocation in the nucleus after IFN-alpha treatment. Its function is as follows. Replicates the viral (+) and (-) genome, and performs the capping of genomes in the cytoplasm. NS5 methylates viral RNA cap at guanine N-7 and ribose 2'-O positions. Besides its role in RNA genome replication, also prevents the establishment of cellular antiviral state by blocking the interferon-alpha/beta (IFN-alpha/beta) signaling pathway. Inhibits host JAK1 and TYK2 phosphorylation, thereby preventing activation of JAK-STAT signaling pathway. This Aedes (Tropical bont tick) protein is Genome polyprotein.